The following is a 400-amino-acid chain: Enoyl-[acyl-carrier-protein] reductase [NADH] 2 (400 aa).

NAD(+) is bound by residues 48–53 (GASSGF), 75–76 (FE), 112–113 (DA), and 141–142 (LA). A substrate-binding site is contributed by Y228. Y238 serves as the catalytic Proton donor. Residues K247 and 276 to 278 (LVT) each bind NAD(+).

The protein belongs to the TER reductase family. As to quaternary structure, monomer.

It catalyses the reaction a 2,3-saturated acyl-[ACP] + NAD(+) = a (2E)-enoyl-[ACP] + NADH + H(+). It participates in lipid metabolism; fatty acid biosynthesis. Functionally, involved in the final reduction of the elongation cycle of fatty acid synthesis (FAS II). Catalyzes the reduction of a carbon-carbon double bond in an enoyl moiety that is covalently linked to an acyl carrier protein (ACP). The protein is Enoyl-[acyl-carrier-protein] reductase [NADH] 2 of Vibrio vulnificus (strain CMCP6).